Reading from the N-terminus, the 424-residue chain is 3-oxo-tetronate kinase (424 aa).

Residues Ser264, 363–366, and Gly408 contribute to the ATP site; that span reads GGET.

It belongs to the four-carbon acid sugar kinase family.

It catalyses the reaction 3-dehydro-L-erythronate + ATP = 3-dehydro-4-O-phospho-L-erythronate + ADP + H(+). It carries out the reaction 3-dehydro-D-erythronate + ATP = 3-dehydro-4-O-phospho-D-erythronate + ADP + H(+). In terms of biological role, catalyzes the ATP-dependent phosphorylation of 3-oxo-tetronate to 3-oxo-tetronate 4-phosphate. The chain is 3-oxo-tetronate kinase from Methylobacterium radiotolerans (strain ATCC 27329 / DSM 1819 / JCM 2831 / NBRC 15690 / NCIMB 10815 / 0-1).